The chain runs to 125 residues: Small ribosomal subunit protein uS13 (125 aa).

The tract at residues 94 to 125 (SLPVRGQRTRTNARTRKGKRKTVAGKKKAVKK) is disordered.

It belongs to the universal ribosomal protein uS13 family. In terms of assembly, part of the 30S ribosomal subunit. Forms a loose heterodimer with protein S19. Forms two bridges to the 50S subunit in the 70S ribosome.

Its function is as follows. Located at the top of the head of the 30S subunit, it contacts several helices of the 16S rRNA. In the 70S ribosome it contacts the 23S rRNA (bridge B1a) and protein L5 of the 50S subunit (bridge B1b), connecting the 2 subunits; these bridges are implicated in subunit movement. Contacts the tRNAs in the A and P-sites. The sequence is that of Small ribosomal subunit protein uS13 from Chlorobium chlorochromatii (strain CaD3).